We begin with the raw amino-acid sequence, 392 residues long: Phosphoglycerate kinase (392 aa).

Substrate is bound by residues 21-23 (DLN), arginine 36, 59-62 (HLGR), arginine 113, and arginine 146. ATP contacts are provided by residues lysine 197, glutamate 319, and 345–348 (GGDT).

Belongs to the phosphoglycerate kinase family. In terms of assembly, monomer.

The protein localises to the cytoplasm. The catalysed reaction is (2R)-3-phosphoglycerate + ATP = (2R)-3-phospho-glyceroyl phosphate + ADP. Its pathway is carbohydrate degradation; glycolysis; pyruvate from D-glyceraldehyde 3-phosphate: step 2/5. The chain is Phosphoglycerate kinase from Thioalkalivibrio sulfidiphilus (strain HL-EbGR7).